Here is a 496-residue protein sequence, read N- to C-terminus: Cytochrome P450 71D180 (496 aa).

The chain crosses the membrane as a helical; Signal-anchor for type II membrane protein span at residues 1-21; the sequence is MDISISWVVIIVFVLSYLILM. C435 is a heme binding site. Residues 471-496 form a disordered region; that stretch reads MSETPGLSGPRKNPLIMIPTIHNPTS.

Belongs to the cytochrome P450 family. Requires heme as cofactor.

It is found in the membrane. It catalyses the reaction gamma-terpinene + 2 reduced [NADPH--hemoprotein reductase] + 2 O2 = carvacrol + 2 oxidized [NADPH--hemoprotein reductase] + 3 H2O + 2 H(+). The catalysed reaction is (4S)-limonene + reduced [NADPH--hemoprotein reductase] + O2 = (1S,5R)-carveol + oxidized [NADPH--hemoprotein reductase] + H2O + H(+). The enzyme catalyses (4R)-limonene + reduced [NADPH--hemoprotein reductase] + O2 = (1R,5S)-carveol + oxidized [NADPH--hemoprotein reductase] + H2O + H(+). The protein operates within secondary metabolite biosynthesis; terpenoid biosynthesis. In terms of biological role, involved in the biosynthesis of phenolic monoterpenes natural products thymol and carvacrol which have a broad range of biological activities acting as antimicrobial compounds, insecticides, antioxidants and pharmaceutical agents. Catalyzes the C2-hydroxylation of gamma-terpinene to produce carvacrol. Mediates also the C6-hydroxylation of (4S)-limonene and (4R)-limonene to form carveol. In Origanum majorana (Sweet marjoram), this protein is Cytochrome P450 71D180.